We begin with the raw amino-acid sequence, 806 residues long: Ankyrin repeat, bromo and BTB domain-containing protein DDB_G0293800 (806 aa).

ANK repeat units follow at residues 1–30 (MSNKTLPYCCEHGLKDEVIALLAKGEDVNQ), 34–63 (SNRYPLHYAAIGGYIEIVAMLLERGALVNC), 67–96 (RGATPLHYASRGGRIECIQLLIDNKADVNC), 100–130 (AGSTPLHTALQCNETKCAIALIETFGADVNL), and 134–163 (EGSTALHLASARGLVPVIVALLENGARADV). Basic and acidic residues predominate over residues 210-228 (GVGKKEDDDNNMKIDKQES). The segment at 210–231 (GVGKKEDDDNNMKIDKQESEQQ) is disordered. Residues 239 to 307 (SDITFLIENQ…IYTGSIEKFE (69 aa)) enclose the BTB domain. 2 disordered regions span residues 423-517 (TRTA…SDSM) and 621-743 (QNFP…EERR). 2 stretches are compositionally biased toward low complexity: residues 426–436 (ANANASNSNQS) and 443–511 (TSTT…SSSS). Positions 516–622 (SMNEKNLTFC…NAFDQKFLQN (107 aa)) constitute a Bromo domain. The span at 626–641 (EKPPTYKPPPPTPTPI) shows a compositional bias: pro residues. The span at 642–658 (PTQQQQQQSTSSTSTPT) shows a compositional bias: low complexity. Over residues 666-675 (DEHVKVKEDT) the composition is skewed to basic and acidic residues. The segment covering 676-693 (NSAQPTSSSSNHTNGENA) has biased composition (polar residues). Residues 694–733 (SSSSSSSSSKQSNNNNNNNNNNNSNSTTNSSSSSSSTTTT) are compositionally biased toward low complexity. Residues 727-806 (SSSTTTTQKK…ECFKKQKQDE (80 aa)) enclose the NET domain.

The sequence is that of Ankyrin repeat, bromo and BTB domain-containing protein DDB_G0293800 from Dictyostelium discoideum (Social amoeba).